The primary structure comprises 152 residues: Nucleoside diphosphate kinase A (152 aa).

ATP-binding residues include Lys12, Phe60, Arg88, and Thr94. Lys100 is covalently cross-linked (Glycyl lysine isopeptide (Lys-Gly) (interchain with G-Cter in ubiquitin)). Arg105 and Asn115 together coordinate ATP. His118 serves as the catalytic Pros-phosphohistidine intermediate. A phosphoserine mark is found at Ser120 and Ser122. Lys124 carries the post-translational modification N6-acetyllysine. The residue at position 125 (Ser125) is a Phosphoserine.

This sequence belongs to the NDK family. As to quaternary structure, hexamer of two different chains: An and B (A6, A5B, A4B2, A3B3, A2B4, AB5, B6). Interacts with PRUNE1. Component of the SET complex, composed of at least ANP32A, APEX1, HMGB2, NME1, SET and TREX1. Within this complex, interacts directly with SET. Also interacts with TREX1, but only following translocation to the nucleus. The cofactor is Mg(2+).

It is found in the cytoplasm. Its subcellular location is the nucleus. The enzyme catalyses a 2'-deoxyribonucleoside 5'-diphosphate + ATP = a 2'-deoxyribonucleoside 5'-triphosphate + ADP. It catalyses the reaction a ribonucleoside 5'-diphosphate + ATP = a ribonucleoside 5'-triphosphate + ADP. Its activity is regulated as follows. Autophosphorylation at His-118 increases serine/threonine protein kinase activity of the enzyme. Interaction with the SET complex inhibits exonuclease activity. Major role in the synthesis of nucleoside triphosphates other than ATP. The ATP gamma phosphate is transferred to the NDP beta phosphate via a ping-pong mechanism, using a phosphorylated active-site intermediate. Possesses nucleoside-diphosphate kinase, serine/threonine-specific protein kinase, geranyl and farnesyl pyrophosphate kinase, histidine protein kinase and 3'-5' exonuclease activities. Involved in cell proliferation, differentiation and development, signal transduction, G protein-coupled receptor endocytosis, and gene expression. Required for neural development including neural patterning and cell fate determination. During GZMA-mediated cell death, works in concert with TREX1. NME1 nicks one strand of DNA and TREX1 removes bases from the free 3' end to enhance DNA damage and prevent DNA end reannealing and rapid repair. The protein is Nucleoside diphosphate kinase A (Nme1) of Mus musculus (Mouse).